The primary structure comprises 85 residues: Conotoxin Lt28.3 (85 aa).

The signal sequence occupies residues 1–21 (MPKLEMMLLVLLILPLCYIDA). Positions 22-40 (VGPLPPWNMEDEIIEHWQK) are excised as a propeptide.

It belongs to the conotoxin D superfamily. In terms of processing, contains 5 disulfide bonds. In terms of tissue distribution, expressed by the venom duct.

Its subcellular location is the secreted. Probable neurotoxin. This is Conotoxin Lt28.3 from Conus litteratus (Lettered cone).